The following is a 259-amino-acid chain: Activator of lactoyl-CoA dehydratase (259 aa).

[4Fe-4S] cluster contacts are provided by cysteine 125 and cysteine 164.

In terms of assembly, homodimer. Requires [4Fe-4S] cluster as cofactor.

In terms of biological role, required for the activation of lactoyl-CoA dehydratase. This protein is extremely sensitive towards oxygen. This chain is Activator of lactoyl-CoA dehydratase (lcdC), found in Anaerotignum propionicum (Clostridium propionicum).